Here is a 410-residue protein sequence, read N- to C-terminus: Probable peptidoglycan glycosyltransferase FtsW (410 aa).

The Cytoplasmic segment spans residues 1 to 37; it reads MRSEERQLNLFGTSVNWSWPNLFKEREAPGMQLYDRA. The helical transmembrane segment at 38 to 58 threads the bilayer; that stretch reads LLFAVLSLICFGFVMVMSASM. Residues 59–69 lie on the Periplasmic side of the membrane; sequence PEAQSLTGNPY. A helical membrane pass occupies residues 70–90; that stretch reads HFAIRHFAYLVGCAVIAAVVL. Residues 91 to 99 lie on the Cytoplasmic side of the membrane; the sequence is RIEMSRWQQ. A helical transmembrane segment spans residues 100-120; the sequence is FSPLLLLIVGIMLVAVLLVGT. Over 121–131 the chain is Periplasmic; that stretch reads SVNGATRWLSV. A helical transmembrane segment spans residues 132–154; that stretch reads GPIRIQVAELAKFAFTIYMAGYL. At 155 to 163 the chain is on the cytoplasmic side; the sequence is VRRHQEIRE. The helical transmembrane segment at 164 to 184 threads the bilayer; the sequence is NAKGFYKPIAVFAVYAFLILM. The Periplasmic segment spans residues 185–186; the sequence is QP. A helical transmembrane segment spans residues 187-207; the sequence is DLGTVVVLFVGTVGLLFLAGA. A topological domain (cytoplasmic) is located at residue arginine 208. The helical transmembrane segment at 209-229 threads the bilayer; the sequence is LLDFFALILTGVMAFVALVLL. Residues 230-291 are Periplasmic-facing; the sequence is EPYRMRRVTS…PEAHTDFIFA (62 aa). A helical transmembrane segment spans residues 292–312; it reads VIGEELGFIGIVVVLSVLLFV. Topologically, residues 313–336 are cytoplasmic; sequence ALRAIKLGNLCIEIDKPFEGYLAY. The helical transmembrane segment at 337–357 threads the bilayer; the sequence is AIGIWFCFQTVVNVGASIGML. Residues 358–364 lie on the Periplasmic side of the membrane; that stretch reads PTKGLTL. Residues 365–385 form a helical membrane-spanning segment; it reads PFISYGGSSLWVMTAAAMILI. At 386–410 the chain is on the cytoplasmic side; the sequence is RIDHERRLSSIQAVQGKKVNDNREY.

This sequence belongs to the SEDS family. FtsW subfamily.

The protein resides in the cell inner membrane. It catalyses the reaction [GlcNAc-(1-&gt;4)-Mur2Ac(oyl-L-Ala-gamma-D-Glu-L-Lys-D-Ala-D-Ala)](n)-di-trans,octa-cis-undecaprenyl diphosphate + beta-D-GlcNAc-(1-&gt;4)-Mur2Ac(oyl-L-Ala-gamma-D-Glu-L-Lys-D-Ala-D-Ala)-di-trans,octa-cis-undecaprenyl diphosphate = [GlcNAc-(1-&gt;4)-Mur2Ac(oyl-L-Ala-gamma-D-Glu-L-Lys-D-Ala-D-Ala)](n+1)-di-trans,octa-cis-undecaprenyl diphosphate + di-trans,octa-cis-undecaprenyl diphosphate + H(+). Its pathway is cell wall biogenesis; peptidoglycan biosynthesis. In terms of biological role, peptidoglycan polymerase that is essential for cell division. This chain is Probable peptidoglycan glycosyltransferase FtsW, found in Shewanella sediminis (strain HAW-EB3).